Consider the following 345-residue polypeptide: Ryncolin-1 (345 aa).

A signal peptide spans 1–19 (MKPWAAFHLIFLVASSLEG). The segment at 48-118 (ILQSQPGIPG…DKGDKGEDCN (71 aa)) is disordered. Residues 57-114 (GIPGVPGTNGSEGLKGDPGPQGPPGIRGPDGIRGEAGPKGDKGDQGDKGDKGDKGDKG) enclose the Collagen-like domain. Basic and acidic residues predominate over residues 86–116 (DGIRGEAGPKGDKGDQGDKGDKGDKGDKGED). The Fibrinogen C-terminal domain maps to 121–339 (GCLPTEVRNC…YADMKIRPQQ (219 aa)). Cystine bridges form between Cys-130-Cys-158 and Cys-282-Cys-295.

The protein belongs to the ficolin lectin family. Veficolin subfamily. In terms of processing, hydroxylated, possibly at Pro-80. As to expression, expressed by the venom duct.

The protein resides in the secreted. Functionally, initiates complement activation and/or interferes in platelet aggregation and/or blood coagulation. This Cerberus rynchops (Dog-faced water snake) protein is Ryncolin-1.